Consider the following 246-residue polypeptide: Enolase-phosphatase E1 (246 aa).

Asp15 and Glu17 together coordinate Mg(2+). Substrate is bound by residues Ser134 to Ser135 and Lys174. Position 201 (Asp201) interacts with Mg(2+).

Belongs to the HAD-like hydrolase superfamily. MasA/MtnC family. Monomer. The cofactor is Mg(2+).

It is found in the cytoplasm. Its subcellular location is the nucleus. It catalyses the reaction 5-methylsulfanyl-2,3-dioxopentyl phosphate + H2O = 1,2-dihydroxy-5-(methylsulfanyl)pent-1-en-3-one + phosphate. Its pathway is amino-acid biosynthesis; L-methionine biosynthesis via salvage pathway; L-methionine from S-methyl-5-thio-alpha-D-ribose 1-phosphate: step 3/6. It participates in amino-acid biosynthesis; L-methionine biosynthesis via salvage pathway; L-methionine from S-methyl-5-thio-alpha-D-ribose 1-phosphate: step 4/6. Its function is as follows. Bifunctional enzyme that catalyzes the enolization of 2,3-diketo-5-methylthiopentyl-1-phosphate (DK-MTP-1-P) into the intermediate 2-hydroxy-3-keto-5-methylthiopentenyl-1-phosphate (HK-MTPenyl-1-P), which is then dephosphorylated to form the acireductone 1,2-dihydroxy-3-keto-5-methylthiopentene (DHK-MTPene). The protein is Enolase-phosphatase E1 of Debaryomyces hansenii (strain ATCC 36239 / CBS 767 / BCRC 21394 / JCM 1990 / NBRC 0083 / IGC 2968) (Yeast).